Reading from the N-terminus, the 485-residue chain is Cysteine--tRNA ligase (485 aa).

Cys-27 provides a ligand contact to Zn(2+). Residues 29 to 39 (ITAYDFSHIGH) carry the 'HIGH' region motif. Zn(2+) is bound by residues Cys-208, His-233, and Glu-237. The 'KMSKS' region signature appears at 265–269 (KMSKS). Lys-268 provides a ligand contact to ATP.

This sequence belongs to the class-I aminoacyl-tRNA synthetase family. Monomer. The cofactor is Zn(2+).

The protein resides in the cytoplasm. The enzyme catalyses tRNA(Cys) + L-cysteine + ATP = L-cysteinyl-tRNA(Cys) + AMP + diphosphate. The sequence is that of Cysteine--tRNA ligase from Lawsonia intracellularis (strain PHE/MN1-00).